The sequence spans 129 residues: NADPH-dependent 7-cyano-7-deazaguanine reductase (129 aa).

Residue Cys-42 is the Thioimide intermediate of the active site. Asp-49 (proton donor) is an active-site residue. Residues 64–66 and 83–84 contribute to the substrate site; these read VEL and HE.

The protein belongs to the GTP cyclohydrolase I family. QueF type 1 subfamily.

Its subcellular location is the cytoplasm. The enzyme catalyses 7-aminomethyl-7-carbaguanine + 2 NADP(+) = 7-cyano-7-deazaguanine + 2 NADPH + 3 H(+). The protein operates within tRNA modification; tRNA-queuosine biosynthesis. Its function is as follows. Catalyzes the NADPH-dependent reduction of 7-cyano-7-deazaguanine (preQ0) to 7-aminomethyl-7-deazaguanine (preQ1). This is NADPH-dependent 7-cyano-7-deazaguanine reductase from Synechococcus sp. (strain CC9605).